The primary structure comprises 344 residues: Phenylalanine--tRNA ligase alpha subunit (344 aa).

E256 contributes to the Mg(2+) binding site.

Belongs to the class-II aminoacyl-tRNA synthetase family. Phe-tRNA synthetase alpha subunit type 1 subfamily. As to quaternary structure, tetramer of two alpha and two beta subunits. Mg(2+) serves as cofactor.

The protein localises to the cytoplasm. The catalysed reaction is tRNA(Phe) + L-phenylalanine + ATP = L-phenylalanyl-tRNA(Phe) + AMP + diphosphate + H(+). In Bacillus cereus (strain G9842), this protein is Phenylalanine--tRNA ligase alpha subunit.